Here is a 93-residue protein sequence, read N- to C-terminus: Cell division protein CrgA (93 aa).

A run of 2 helical transmembrane segments spans residues 31-51 and 70-90; these read VWFVALFIGLMLIGLVWLMVF and LGPWNYAIAFAFMITGLLLTM.

This sequence belongs to the CrgA family.

It localises to the cell membrane. Involved in cell division. This chain is Cell division protein CrgA, found in Mycobacterium marinum (strain ATCC BAA-535 / M).